The sequence spans 323 residues: Olfactory receptor 1E2 (323 aa).

Residues 1-25 (MMGQNQTSISDFLLLGLPIQPEQQN) are Extracellular-facing. Asn5 is a glycosylation site (N-linked (GlcNAc...) asparagine). The helical transmembrane segment at 26 to 49 (LCYALFLAMYLTTLLGNLLIIVLI) threads the bilayer. At 50 to 57 (RLDSHLHT) the chain is on the cytoplasmic side. A helical membrane pass occupies residues 58 to 79 (PVYLFLSNLSFSDLCFSSVTMP). Residues 80-100 (KLLQNMQNQDPSIPYADCLTQ) lie on the Extracellular side of the membrane. Cys97 and Cys198 form a disulfide bridge. The chain crosses the membrane as a helical span at residues 101–120 (MYFFLYFSDLESFLLVAMAY). Residues 121 to 148 (DRYVAICFPMHYTAICFLLHYTAIMSPM) lie on the Cytoplasmic side of the membrane. A helical transmembrane segment spans residues 149-167 (LCLSVVALSWVLTTFHAML). Residues 168–205 (HTLLMARLCFCADNVIPHFFCDMSALLKLACSDTRVNE) are Extracellular-facing. The chain crosses the membrane as a helical span at residues 206-228 (WVIFIMGGLILVIPFLLILGSYA). Residues 229–245 (RIVSSILKVPSSKGICK) are Cytoplasmic-facing. The chain crosses the membrane as a helical span at residues 246–269 (AFSTCGSHLSVVSLFYGTVIGLYL). At 270–281 (CPSANSSTLKDT) the chain is on the extracellular side. A glycan (N-linked (GlcNAc...) asparagine) is linked at Asn274. Residues 282-301 (VMAMMYTVVTPMLTPFIYSL) traverse the membrane as a helical segment. The Cytoplasmic portion of the chain corresponds to 302-323 (RNRDMKGALERVICKRKNPFLL).

The protein belongs to the G-protein coupled receptor 1 family.

The protein resides in the cell membrane. Odorant receptor. This Homo sapiens (Human) protein is Olfactory receptor 1E2 (OR1E2).